Consider the following 361-residue polypeptide: Peptide chain release factor 1 (361 aa).

Q237 carries the N5-methylglutamine modification. Over residues 287 to 297 the composition is skewed to basic and acidic residues; the sequence is KQQKEQSDTRK. Positions 287 to 313 are disordered; it reads KQQKEQSDTRKSLVGSGDRSERIRTYN.

The protein belongs to the prokaryotic/mitochondrial release factor family. In terms of processing, methylated by PrmC. Methylation increases the termination efficiency of RF1.

The protein localises to the cytoplasm. Peptide chain release factor 1 directs the termination of translation in response to the peptide chain termination codons UAG and UAA. The sequence is that of Peptide chain release factor 1 from Francisella tularensis subsp. holarctica (strain FTNF002-00 / FTA).